Here is a 244-residue protein sequence, read N- to C-terminus: 3-oxoacyl-[acyl-carrier-protein] reductase FabG (244 aa).

Residues 12 to 15, Thr37, 59 to 60, and Asn86 contribute to the NADP(+) site; these read GASR and NV. Substrate is bound at residue Ser138. Tyr151 (proton acceptor) is an active-site residue. Residues 151 to 155 and Ile184 each bind NADP(+); that span reads YAAAK.

It belongs to the short-chain dehydrogenases/reductases (SDR) family. In terms of assembly, homotetramer.

It carries out the reaction a (3R)-hydroxyacyl-[ACP] + NADP(+) = a 3-oxoacyl-[ACP] + NADPH + H(+). The protein operates within lipid metabolism; fatty acid biosynthesis. Functionally, catalyzes the NADPH-dependent reduction of beta-ketoacyl-ACP substrates to beta-hydroxyacyl-ACP products, the first reductive step in the elongation cycle of fatty acid biosynthesis. This Vibrio harveyi (Beneckea harveyi) protein is 3-oxoacyl-[acyl-carrier-protein] reductase FabG (fabG).